The sequence spans 648 residues: Bifunctional lysine-specific demethylase and histidyl-hydroxylase NO66 (648 aa).

The segment at 1–168 is disordered; sequence MSKVSSIFDT…KGAKAAKKNK (168 aa). Residues 17 to 28 are compositionally biased toward low complexity; sequence PATTENGAAAKP. A compositionally biased stretch (basic residues) spans 109 to 119; sequence DHRKHKEKLRK. Positions 123–137 are enriched in polar residues; sequence GVENSRQAAASTSML. Basic residues predominate over residues 155 to 168; sequence PVHHKGAKAAKKNK. In terms of domain architecture, JmjC spans 308–453; sequence CSIRMLNPQT…DLLELYLPHA (146 aa). Positions 354, 356, and 419 each coordinate Fe cation.

This sequence belongs to the ROX family. NO66 subfamily. The cofactor is Fe(2+).

The protein resides in the nucleus. It catalyses the reaction N(6),N(6)-dimethyl-L-lysyl(36)-[histone H3] + 2 2-oxoglutarate + 2 O2 = L-lysyl(36)-[histone H3] + 2 formaldehyde + 2 succinate + 2 CO2. Oxygenase that can act as both a histone lysine demethylase and a ribosomal histidine hydroxylase. Specifically demethylates 'Lys-4' (H3K4me) and 'Lys-36' (H3K36me) of histone H3, thereby playing a central role in histone code. This is Bifunctional lysine-specific demethylase and histidyl-hydroxylase NO66 from Culex quinquefasciatus (Southern house mosquito).